The primary structure comprises 354 residues: Elongation factor Ts, mitochondrial (354 aa).

The N-terminal 47 residues, 1–47 (MMRSTLSLLQKCRLPNNNGSLLSFKNNQVVNQTALFSMKSNQQYRFY), are a transit peptide targeting the mitochondrion.

It belongs to the EF-Ts family.

Its subcellular location is the mitochondrion. Associates with the EF-Tu.GDP complex and induces the exchange of GDP to GTP. It remains bound to the aminoacyl-tRNA.EF-Tu.GTP complex up to the GTP hydrolysis stage on the ribosome. The sequence is that of Elongation factor Ts, mitochondrial (tsfm) from Heterostelium pallidum (strain ATCC 26659 / Pp 5 / PN500) (Cellular slime mold).